The primary structure comprises 895 residues: Serine/threonine-protein kinase-like protein ACR4 (895 aa).

The signal sequence occupies residues 1–29 (MRMFETRAREWILLVKLVLFTSIWQLASA). Residues 30–434 (LGSMSSIAIS…FWSLQLPIAT (405 aa)) lie on the Extracellular side of the membrane. 7 repeat units span residues 38-73 (ISYGEGGSVFCGLKSDGSHLVVCYGSNSAILYGTPG), 77-112 (FIGLTGGDGFMCGLLMLSHQPYCWGNSAFIQMGVPQ), 130-167 (LCGLRKPIVGRRKNSNIISSSLVDCWGYNMTRNFVFDK), 169-202 (LHSLSAGSEFNCALSSKDKSVFCWGDENSSQVIS), 210-245 (FQKIAAGGYHVCGILDGLESRVLCWGKSLEFEEEVT), 262-296 (LLAVVGGKFYACGIKRYDHSAVCWGFFVNRSTPAP), and 301-339 (FYDLAAGNYFTCGVLTGTSMSPVCWGLGFPASIPLAVSP). Positions 38–339 (ISYGEGGSVF…PASIPLAVSP (302 aa)) are 7 X 36 AA repeats. Asn158 and Asn196 each carry an N-linked (GlcNAc...) asparagine glycan. N-linked (GlcNAc...) asparagine glycosylation occurs at Asn290. The TNFR-Cys repeat unit spans residues 346–395 (PCPPGTHELSNQENSPCKFTGSHICLPCSTSCPPGMYQKSVCTERSDQVC). 3 cysteine pairs are disulfide-bonded: Cys347–Cys370, Cys373–Cys387, and Cys377–Cys395. N-linked (GlcNAc...) asparagine glycans are attached at residues Asn398 and Asn410. Residues 435–455 (AEIGFALFLVAVVSITAALYI) traverse the membrane as a helical segment. Residues 456–895 (RYRLRNCRCS…GQSLFLHHNF (440 aa)) lie on the Cytoplasmic side of the membrane. Phosphoserine is present on Ser475. Residues 512–789 (FKEESIVGKG…KVTTALERAL (278 aa)) enclose the Protein kinase domain. Residues 518–526 (VGKGSFSCV) and Lys540 each bind ATP. Catalysis depends on Asp641, which acts as the Proton acceptor. The tract at residues 818-895 (SWRIGSKRSG…GQSLFLHHNF (78 aa)) is disordered. Basic and acidic residues predominate over residues 865–877 (EGRKQQEALRSLE).

It belongs to the protein kinase superfamily. Ser/Thr protein kinase family. In terms of assembly, homodimer. Interacts with PP2A3. Post-translationally, autophosphorylated and phosphorylated by ALE2. Expressed in seedlings, floral buds, siliques, leaves, shoot apical meristems (SAM), and, to a lower extent, in roots.

The protein resides in the cell membrane. The protein localises to the endosome. It localises to the multivesicular body membrane. The enzyme catalyses L-seryl-[protein] + ATP = O-phospho-L-seryl-[protein] + ADP + H(+). It catalyses the reaction L-threonyl-[protein] + ATP = O-phospho-L-threonyl-[protein] + ADP + H(+). Functionally, controls formative cell division in meristems, including root tips and lateral root initiation zones of the pericycle, in response to CLE40 signal. Acts with CLE40p peptide as a ligand-receptor pair in a signal transduction pathway, coordinating movement of the root tip and organization of cell divisions in the root meristem. Required during embryogenesis and development, probably for the differentiation of protoderm and epidermal cells. Involved in the regulation of cellular organization during the development of sepal margins and ovule integument outgrowth and promotes giant cell formation. Can phosphorylate ALE2. The protein is Serine/threonine-protein kinase-like protein ACR4 of Arabidopsis thaliana (Mouse-ear cress).